A 150-amino-acid chain; its full sequence is Probable histone H2A.5 (150 aa).

Residues 1 to 12 (MESSQATTKPTR) are compositionally biased toward low complexity. 2 disordered regions span residues 1–28 (MESS…SVSK) and 130–150 (KSTA…PKKA). Positions 131–150 (STASSSQAEKASATKSPKKA) are enriched in polar residues. At serine 146 the chain carries Phosphoserine. Residues 146–149 (SPKK) carry the SPKK motif motif.

The protein belongs to the histone H2A family. The nucleosome is a histone octamer containing two molecules each of H2A, H2B, H3 and H4 assembled in one H3-H4 heterotetramer and two H2A-H2B heterodimers. The octamer wraps approximately 147 bp of DNA. Post-translationally, not ubiquitinated.

Its subcellular location is the nucleus. It is found in the chromosome. Functionally, core component of nucleosome. Nucleosomes wrap and compact DNA into chromatin, limiting DNA accessibility to the cellular machineries which require DNA as a template. Histones thereby play a central role in transcription regulation, DNA repair, DNA replication and chromosomal stability. DNA accessibility is regulated via a complex set of post-translational modifications of histones, also called histone code, and nucleosome remodeling. This chain is Probable histone H2A.5, found in Arabidopsis thaliana (Mouse-ear cress).